The primary structure comprises 574 residues: Methionine--tRNA ligase (574 aa).

Positions 11 to 21 (PYINGIKHLGN) match the 'HIGH' region motif. Residues Cys143, Cys146, Cys156, and Cys159 each coordinate Zn(2+). Positions 345 to 349 (KFSTS) match the 'KMSKS' region motif. Thr348 is an ATP binding site.

This sequence belongs to the class-I aminoacyl-tRNA synthetase family. MetG type 1 subfamily. Monomer. Requires Zn(2+) as cofactor.

It is found in the cytoplasm. The catalysed reaction is tRNA(Met) + L-methionine + ATP = L-methionyl-tRNA(Met) + AMP + diphosphate. Is required not only for elongation of protein synthesis but also for the initiation of all mRNA translation through initiator tRNA(fMet) aminoacylation. The polypeptide is Methionine--tRNA ligase (Streptomyces avermitilis (strain ATCC 31267 / DSM 46492 / JCM 5070 / NBRC 14893 / NCIMB 12804 / NRRL 8165 / MA-4680)).